The primary structure comprises 312 residues: Taste receptor type 2 member 9 (312 aa).

Topologically, residues 1 to 9 (MPSAIEAIY) are extracellular. Residues 10–32 (IILIAGELTIGIWGNGFIVLVNC) traverse the membrane as a helical segment. Residues 33-52 (IDWLKRRDISLIDIILISLA) are Cytoplasmic-facing. Residues 53 to 72 (ISRICLLCVISLDGFFMLLF) form a helical membrane-spanning segment. The Extracellular segment spans residues 73 to 86 (PGTYGNSVLVSIVN). Residues 87-109 (VVWTFANNSSLWFTSCLSIFYLL) traverse the membrane as a helical segment. At 110-128 (KIANISHPFFFWLKLKINK) the chain is on the cytoplasmic side. Residues 129 to 146 (VMLAILLGSFLISLIISV) form a helical membrane-spanning segment. Topologically, residues 147–180 (PKNDDMWYHLFKVSHEENITWKFKVSKIPGTFKQ) are extracellular. An N-linked (GlcNAc...) asparagine glycan is attached at Asn-164. The chain crosses the membrane as a helical span at residues 181 to 203 (LTLNLGVMVPFILCLISFFLLLF). The Cytoplasmic portion of the chain corresponds to 204 to 234 (SLVRHTKQIRLHATGFRDPSTEAHMRAIKAV). A helical transmembrane segment spans residues 235 to 257 (IIFLLLLIVYYPVFLVMTSSALI). At 258–261 (PQGK) the chain is on the extracellular side. The helical transmembrane segment at 262–284 (LVLMIGDIVTVIFPSSHSFILIM) threads the bilayer. At 285–312 (GNSKLREAFLKMLRFVKCFLRRRKPFVP) the chain is on the cytoplasmic side.

This sequence belongs to the G-protein coupled receptor T2R family. As to expression, expressed in subsets of taste receptor cells of the tongue and palate epithelium and exclusively in gustducin-positive cells.

The protein resides in the membrane. In terms of biological role, gustducin-coupled receptor implicated in the perception of bitter compounds in the oral cavity and the gastrointestinal tract. Signals through PLCB2 and the calcium-regulated cation channel TRPM5. The polypeptide is Taste receptor type 2 member 9 (TAS2R9) (Homo sapiens (Human)).